Consider the following 354-residue polypeptide: Multiple sugar-binding periplasmic receptor ChvE (354 aa).

A signal peptide spans 1–25; that stretch reads MKSIISLTAAAAIGVAMFVAPAFAA.

This sequence belongs to the bacterial solute-binding protein 2 family.

Its subcellular location is the periplasm. Its function is as follows. Required for effective transcriptional induction of the vir genes by monosaccharides in response to plant signals and for normal growth and chemotaxis towards certain sugars. Functions as a periplasmic multiple sugar-binding receptor protein. It does not interact with a transport system. This is Multiple sugar-binding periplasmic receptor ChvE (chvE) from Rhizobium radiobacter (Agrobacterium tumefaciens).